A 597-amino-acid polypeptide reads, in one-letter code: Proline--tRNA ligase (597 aa).

This sequence belongs to the class-II aminoacyl-tRNA synthetase family. ProS type 1 subfamily. In terms of assembly, homodimer.

The protein localises to the cytoplasm. The enzyme catalyses tRNA(Pro) + L-proline + ATP = L-prolyl-tRNA(Pro) + AMP + diphosphate. Functionally, catalyzes the attachment of proline to tRNA(Pro) in a two-step reaction: proline is first activated by ATP to form Pro-AMP and then transferred to the acceptor end of tRNA(Pro). As ProRS can inadvertently accommodate and process non-cognate amino acids such as alanine and cysteine, to avoid such errors it has two additional distinct editing activities against alanine. One activity is designated as 'pretransfer' editing and involves the tRNA(Pro)-independent hydrolysis of activated Ala-AMP. The other activity is designated 'posttransfer' editing and involves deacylation of mischarged Ala-tRNA(Pro). The misacylated Cys-tRNA(Pro) is not edited by ProRS. The sequence is that of Proline--tRNA ligase from Bifidobacterium longum (strain NCC 2705).